The following is a 56-amino-acid chain: Large ribosomal subunit protein bL32 (56 aa).

Residues 1–38 (MAVQQNKKSRSKRGMRRSHDSLSTAQLSVDATSGELHR) form a disordered region. Positions 7–16 (KKSRSKRGMR) are enriched in basic residues. A compositionally biased stretch (polar residues) spans 21 to 31 (SLSTAQLSVDA).

Belongs to the bacterial ribosomal protein bL32 family.

The sequence is that of Large ribosomal subunit protein bL32 from Shewanella woodyi (strain ATCC 51908 / MS32).